A 51-amino-acid polypeptide reads, in one-letter code: Mating pheromone Er-23 (51 aa).

Disulfide bonds link Cys3/Cys24, Cys6/Cys16, Cys13/Cys47, Cys27/Cys40, and Cys35/Cys51.

It localises to the secreted. Functionally, mating ciliate pheromones (or gamones) are diffusible extracellular communication signals that distinguish different intraspecific classes of cells commonly referred to as 'mating types'. They prepare the latter for conjugation by changing their cell surface properties. This chain is Mating pheromone Er-23 (MAT23), found in Euplotes raikovi.